We begin with the raw amino-acid sequence, 1067 residues long: Lon protease homolog, mitochondrial (1067 aa).

The N-terminal 36 residues, 1–36 (MITRLSGACLRRSGAKRNWPREHLVHRSLLASFSTT), are a transit peptide targeting the mitochondrion. Residues 55-82 (KSKEPKDNKPLDNKNDPKKTHNEDESHT) are compositionally biased toward basic and acidic residues. Disordered stretches follow at residues 55–142 (KSKE…MPLN) and 262–314 (IPPK…ESTP). A compositionally biased stretch (acidic residues) spans 128–139 (FELGGEENEDEM). Residues 162–425 (LLALPIARRP…KALYVLKKEL (264 aa)) enclose the Lon N-terminal domain. Basic and acidic residues predominate over residues 293–311 (VKSDLKQDNGKEEPEKEVE). 578–585 (GPPGVGKT) serves as a coordination point for ATP. A disordered region spans residues 791 to 820 (NSKEKSTGKSGKKTSPQSSEDAANKEASSV). Residues 854–1040 (TTPPGVVMGL…DDVFKRVFSN (187 aa)) form the Lon proteolytic domain. Active-site residues include Ser-946 and Lys-989.

The protein belongs to the peptidase S16 family. In terms of assembly, homohexamer or homoheptamer. Organized in a ring with a central cavity.

It is found in the mitochondrion matrix. The enzyme catalyses Hydrolysis of proteins in presence of ATP.. Its function is as follows. ATP-dependent serine protease that mediates the selective degradation of misfolded, unassembled or oxidatively damaged polypeptides as well as certain short-lived regulatory proteins in the mitochondrial matrix. May also have a chaperone function in the assembly of inner membrane protein complexes. Participates in the regulation of mitochondrial gene expression and in the maintenance of the integrity of the mitochondrial genome. Binds to mitochondrial DNA in a site-specific manner. This is Lon protease homolog, mitochondrial (pim1) from Schizosaccharomyces pombe (strain 972 / ATCC 24843) (Fission yeast).